Here is a 157-residue protein sequence, read N- to C-terminus: MPRSLANAPIMILNGPNLNLLGQRQPEIYGSDTLADVEALCVKAAAAHGGTVDFRQSNHEGELVDWIHEARLNHCGIVINPAAYSHTSVAILDALNTCDGLPVVEVHISNIHQREPFRHHSYVSQRADGVVAGCGVQGYVFGVERIAALAGAGSARA.

Tyr-29 functions as the Proton acceptor in the catalytic mechanism. Substrate is bound by residues Asn-80, His-86, and Asp-93. His-107 functions as the Proton donor in the catalytic mechanism. Residues 108–109 (IS) and Arg-118 each bind substrate.

The protein belongs to the type-II 3-dehydroquinase family. In terms of assembly, homododecamer.

It catalyses the reaction 3-dehydroquinate = 3-dehydroshikimate + H2O. It participates in metabolic intermediate biosynthesis; chorismate biosynthesis; chorismate from D-erythrose 4-phosphate and phosphoenolpyruvate: step 3/7. Its function is as follows. Catalyzes a trans-dehydration via an enolate intermediate. This chain is 3-dehydroquinate dehydratase (aroQ), found in Streptomyces coelicolor (strain ATCC BAA-471 / A3(2) / M145).